The following is a 340-amino-acid chain: Ornithine carbamoyltransferase (340 aa).

Residues 57 to 60 (STRT), Q84, R108, and 135 to 138 (HPTQ) contribute to the carbamoyl phosphate site. L-ornithine contacts are provided by residues N167, D231, and 235 to 236 (SM). Carbamoyl phosphate is bound by residues 272 to 273 (CL) and R317.

It belongs to the aspartate/ornithine carbamoyltransferase superfamily. OTCase family.

It is found in the cytoplasm. It carries out the reaction carbamoyl phosphate + L-ornithine = L-citrulline + phosphate + H(+). It participates in amino-acid biosynthesis; L-arginine biosynthesis; L-arginine from L-ornithine and carbamoyl phosphate: step 1/3. In terms of biological role, reversibly catalyzes the transfer of the carbamoyl group from carbamoyl phosphate (CP) to the N(epsilon) atom of ornithine (ORN) to produce L-citrulline. The protein is Ornithine carbamoyltransferase (argF) of Lactiplantibacillus plantarum (strain ATCC BAA-793 / NCIMB 8826 / WCFS1) (Lactobacillus plantarum).